The chain runs to 72 residues: UPF0270 protein YheU (72 aa).

This sequence belongs to the UPF0270 family.

The protein is UPF0270 protein YheU of Salmonella agona (strain SL483).